The following is a 302-amino-acid chain: Protoheme IX farnesyltransferase (302 aa).

Helical transmembrane passes span 27–47 (VLTLVVFTGWCGLLAAPQSIH), 48–68 (PVLGFTAVLCIALGAGAAGAL), 97–117 (SALHFGVGLGIFSVLLMGLAL), 119–139 (VLAAAILAVSILFYVVVYTIW), 148–168 (IVIGGAAGAFPALIGWAAATG), 176–196 (LLFALVFLWTPPHFWALALFI), 219–239 (IQIMLYTVPMVIAAVAPWAMG), 240–260 (LTGAIYGIGASLLSALFLLLA), and 280–300 (LFGFSILYLFLIFGLVVADKV).

It belongs to the UbiA prenyltransferase family. Protoheme IX farnesyltransferase subfamily.

It is found in the cell inner membrane. It carries out the reaction heme b + (2E,6E)-farnesyl diphosphate + H2O = Fe(II)-heme o + diphosphate. It functions in the pathway porphyrin-containing compound metabolism; heme O biosynthesis; heme O from protoheme: step 1/1. Its function is as follows. Converts heme B (protoheme IX) to heme O by substitution of the vinyl group on carbon 2 of heme B porphyrin ring with a hydroxyethyl farnesyl side group. This Rhizorhabdus wittichii (strain DSM 6014 / CCUG 31198 / JCM 15750 / NBRC 105917 / EY 4224 / RW1) (Sphingomonas wittichii) protein is Protoheme IX farnesyltransferase.